Reading from the N-terminus, the 59-residue chain is Potassium channel toxin alpha-KTx 4.1 (59 aa).

Residues 1 to 22 (MKAFYGILIIFILISMIDLSKQ) form the signal peptide. 3 disulfides stabilise this stretch: Cys-29/Cys-50, Cys-35/Cys-55, and Cys-39/Cys-57. The interaction with Ca(2+)-activated K(+) channels stretch occupies residues 48–55 (GKCMNGKC).

This sequence belongs to the short scorpion toxin superfamily. Potassium channel inhibitor family. Alpha-KTx 04 subfamily. As to expression, expressed by the venom gland.

The protein localises to the secreted. Functionally, potently blocks Kv1.1/KCNA1 (85%), Kv1.2/KCNA2 (91%), Kv1.3/KCNA3 (89%), Kv1.6/KCNA6 (94%), and Shaker (97%). This is Potassium channel toxin alpha-KTx 4.1 from Tityus serrulatus (Brazilian scorpion).